We begin with the raw amino-acid sequence, 156 residues long: Small ribosomal subunit protein uS7 (156 aa).

Belongs to the universal ribosomal protein uS7 family. As to quaternary structure, part of the 30S ribosomal subunit. Contacts proteins S9 and S11.

Its function is as follows. One of the primary rRNA binding proteins, it binds directly to 16S rRNA where it nucleates assembly of the head domain of the 30S subunit. Is located at the subunit interface close to the decoding center, probably blocks exit of the E-site tRNA. The polypeptide is Small ribosomal subunit protein uS7 (Dehalococcoides mccartyi (strain ATCC BAA-2100 / JCM 16839 / KCTC 5957 / BAV1)).